The sequence spans 35 residues: Photosystem II reaction center protein M (35 aa).

A helical membrane pass occupies residues 7-27; it reads GFIATILFVLVPTVFLLILYI.

It belongs to the PsbM family. PSII is composed of 1 copy each of membrane proteins PsbA, PsbB, PsbC, PsbD, PsbE, PsbF, PsbH, PsbI, PsbJ, PsbK, PsbL, PsbM, PsbT, PsbX, PsbY, PsbZ, Psb30/Ycf12, peripheral proteins PsbO, CyanoQ (PsbQ), PsbU, PsbV and a large number of cofactors. It forms dimeric complexes.

It is found in the cellular thylakoid membrane. In terms of biological role, one of the components of the core complex of photosystem II (PSII). PSII is a light-driven water:plastoquinone oxidoreductase that uses light energy to abstract electrons from H(2)O, generating O(2) and a proton gradient subsequently used for ATP formation. It consists of a core antenna complex that captures photons, and an electron transfer chain that converts photonic excitation into a charge separation. This subunit is found at the monomer-monomer interface. This chain is Photosystem II reaction center protein M, found in Crocosphaera subtropica (strain ATCC 51142 / BH68) (Cyanothece sp. (strain ATCC 51142)).